Here is a 367-residue protein sequence, read N- to C-terminus: Mating-type protein ALPHA2 (367 aa).

Positions 273 to 338 form a DNA-binding region, homeobox; TALE-type; that stretch reads GADAIDSEKL…NKRRTGAKKR (66 aa).

The protein belongs to the TALE/M-ATYP homeobox family. Forms a heterodimer with A1.

It is found in the nucleus. Its function is as follows. Mating type proteins are sequence specific DNA-binding proteins that act as master switches in yeast differentiation by controlling gene expression in a cell type-specific fashion. Transcriptional corepressor that acts in conjunction with A1 to repress transcription of haploid-specific genes. The chain is Mating-type protein ALPHA2 (MATB2) from Yarrowia lipolytica (strain CLIB 122 / E 150) (Yeast).